The following is a 340-amino-acid chain: Solute carrier family 35 member G3 (340 aa).

Residues 11 to 31 form a disordered region; sequence PDFTQPSPPSTPSSLTSNHHN. The next 9 helical transmembrane spans lie at 39-59, 69-89, 107-127, 160-180, 189-209, 223-243, 257-277, 283-303, and 307-327; these read TKGLFVALLGGGLSAGFVGPF, LPSLELLIFRCLFHLPIALIL, FLHAILNVLSIGCAYSAVQVV, AWCGLFGSTLGLIIIVGPGLG, LYTALGYVLAFLGGLALSLGL, TVAFLFGLVGLIVSVPGLFVL, CMVAVGLLALVSFVCVSYAVT, LVCAVLHSEVVVALMLQYYVL, and VAPSDIMGAGVVLGSIAIITA. An EamA 1 domain is found at 51 to 176; it reads LSAGFVGPFS…STLGLIIIVG (126 aa). One can recognise an EamA 2 domain in the interval 223-327; sequence TVAFLFGLVG…VLGSIAIITA (105 aa).

This sequence belongs to the SLC35G solute transporter family.

It localises to the membrane. The sequence is that of Solute carrier family 35 member G3 (Slc35g3) from Rattus norvegicus (Rat).